We begin with the raw amino-acid sequence, 442 residues long: tRNA pseudouridine(38/39) synthase (442 aa).

Catalysis depends on D151, which acts as the Nucleophile. Substrate is bound at residue Y222.

The protein belongs to the tRNA pseudouridine synthase TruA family.

The protein resides in the nucleus. The catalysed reaction is uridine(38/39) in tRNA = pseudouridine(38/39) in tRNA. Formation of pseudouridines at positions 38 and 39 in the anticodon stem and loop of transfer RNAs. The chain is tRNA pseudouridine(38/39) synthase (DEG1) from Saccharomyces cerevisiae (strain ATCC 204508 / S288c) (Baker's yeast).